The sequence spans 484 residues: Diaminopimelate decarboxylase 1, chloroplastic (484 aa).

Residues 1-28 (MAAATQFLSQPSSLNPHQLKNQTSQRSR) are compositionally biased toward polar residues. A disordered region spans residues 1–30 (MAAATQFLSQPSSLNPHQLKNQTSQRSRSI). A chloroplast-targeting transit peptide spans 1–49 (MAAATQFLSQPSSLNPHQLKNQTSQRSRSIPVLSLKSTLKPLKRLSVKA). The residue at position 50 (Ala50) is an N-acetylalanine. Lys125 carries the N6-(pyridoxal phosphate)lysine modification. Pyridoxal 5'-phosphate contacts are provided by residues Gly304 and 340–343 (EPGR). Substrate contacts are provided by Arg343, Arg379, and Tyr383. The active-site Proton donor is the Cys411. Positions 412 and 440 each coordinate substrate. Residue Tyr440 coordinates pyridoxal 5'-phosphate.

This sequence belongs to the Orn/Lys/Arg decarboxylase class-II family. LysA subfamily. As to quaternary structure, homodimer. The cofactor is pyridoxal 5'-phosphate.

The protein resides in the plastid. It is found in the chloroplast. It carries out the reaction meso-2,6-diaminopimelate + H(+) = L-lysine + CO2. It functions in the pathway amino-acid biosynthesis; L-lysine biosynthesis via DAP pathway; L-lysine from DL-2,6-diaminopimelate: step 1/1. Specifically catalyzes the decarboxylation of meso-diaminopimelate (meso-DAP) to L-lysine. In Arabidopsis thaliana (Mouse-ear cress), this protein is Diaminopimelate decarboxylase 1, chloroplastic (LYSA1).